The sequence spans 359 residues: Methylthioribose-1-phosphate isomerase (359 aa).

Substrate is bound by residues 52 to 54, Arg-90, and Gln-200; that span reads RGA. Asp-241 serves as the catalytic Proton donor. 251-252 is a substrate binding site; that stretch reads NK.

Belongs to the eIF-2B alpha/beta/delta subunits family. MtnA subfamily.

The catalysed reaction is 5-(methylsulfanyl)-alpha-D-ribose 1-phosphate = 5-(methylsulfanyl)-D-ribulose 1-phosphate. It functions in the pathway amino-acid biosynthesis; L-methionine biosynthesis via salvage pathway; L-methionine from S-methyl-5-thio-alpha-D-ribose 1-phosphate: step 1/6. Functionally, catalyzes the interconversion of methylthioribose-1-phosphate (MTR-1-P) into methylthioribulose-1-phosphate (MTRu-1-P). The polypeptide is Methylthioribose-1-phosphate isomerase (Sulfurimonas denitrificans (strain ATCC 33889 / DSM 1251) (Thiomicrospira denitrificans (strain ATCC 33889 / DSM 1251))).